Consider the following 91-residue polypeptide: Small ribosomal subunit protein bS16 (91 aa).

The protein belongs to the bacterial ribosomal protein bS16 family.

The polypeptide is Small ribosomal subunit protein bS16 (Exiguobacterium sp. (strain ATCC BAA-1283 / AT1b)).